The sequence spans 141 residues: Cytochrome c-type biogenesis protein CcmE (141 aa).

Residues 1-7 are Cytoplasmic-facing; the sequence is MQRKHKR. A helical; Signal-anchor for type II membrane protein transmembrane segment spans residues 8 to 28; that stretch reads ILFVAVSFIALGCVSAFVLFE. Residues 29–141 are Periplasmic-facing; the sequence is LSKSISFFCT…SSDAAVIGSS (113 aa). Heme contacts are provided by His121 and Tyr125.

The protein belongs to the CcmE/CycJ family.

It is found in the cell inner membrane. In terms of biological role, heme chaperone required for the biogenesis of c-type cytochromes. Transiently binds heme delivered by CcmC and transfers the heme to apo-cytochromes in a process facilitated by CcmF and CcmH. This Anaplasma phagocytophilum (strain HZ) protein is Cytochrome c-type biogenesis protein CcmE.